The sequence spans 207 residues: Chloramphenicol acetyltransferase (207 aa).

The active-site Proton acceptor is H186.

Belongs to the chloramphenicol acetyltransferase family. As to quaternary structure, homotrimer.

The enzyme catalyses chloramphenicol + acetyl-CoA = chloramphenicol 3-acetate + CoA. In terms of biological role, this enzyme is an effector of chloramphenicol resistance in bacteria. The chain is Chloramphenicol acetyltransferase (catP) from Clostridium perfringens.